A 113-amino-acid polypeptide reads, in one-letter code: Cell cycle control protein 50C (113 aa).

Topologically, residues 1–34 are cytoplasmic; the sequence is MEERAQHCLSRLLDNSALKQQELPIHRLYFTARR. A helical membrane pass occupies residues 35 to 55; the sequence is VLFVFFATGIFCLCMGIILIL. The Extracellular portion of the chain corresponds to 56 to 113; that stretch reads SARSTQEIEINYTRICANCAKLRENASNFDKECTCSIPFYLSGKMMVGEIQETRLTLH. An N-linked (GlcNAc...) asparagine glycan is attached at asparagine 66.

It belongs to the CDC50/LEM3 family. As to expression, specifically expressed in testis.

It is found in the membrane. The polypeptide is Cell cycle control protein 50C (Homo sapiens (Human)).